The primary structure comprises 419 residues: Phosphatidylcholine:ceramide cholinephosphotransferase 1 (419 aa).

In terms of domain architecture, SAM spans 13–76 (WSPKKVADWL…LDMIETLKME (64 aa)). A Phosphoserine modification is found at serine 14. 5 helical membrane passes run 142 to 162 (FLAFLYALSCFVLTTVMISVV), 190 to 210 (FSICEINGMILVGLWLFQWLL), 221 to 241 (FFCIVGTLYLYRCITMYVTTL), 282 to 302 (MCGDYLYSGHTVMLTLTYLFI), and 310 to 330 (LWWYHWICWLLSVVGIFCILL). The active site involves histidine 291. At 331–419 (AHDHYTVDVV…VKYSRLVNDT (89 aa)) the chain is on the cytoplasmic side. Residues histidine 334 and aspartate 338 contribute to the active site.

This sequence belongs to the sphingomyelin synthase family. Isoform 1 is widely expressed, isoform 2 shows a more narrow distribution and isoform 3 is detected only in testis and heart.

It localises to the golgi apparatus membrane. The catalysed reaction is an N-acylsphing-4-enine + a 1,2-diacyl-sn-glycero-3-phosphocholine = a sphingomyelin + a 1,2-diacyl-sn-glycerol. It carries out the reaction 1-(9Z-octadecenoyl)-2-acyl-sn-3-glycerol + a sphingomyelin = a 1-(9Z-octadecenoyl)-2-acyl-sn-glycero-3-phosphocholine + an N-acylsphing-4-enine. The enzyme catalyses N-hexadecanoylsphinganine + a 1,2-diacyl-sn-glycero-3-phosphocholine = N-hexadecanoyl-sphinganine-1-phosphocholine + a 1,2-diacyl-sn-glycerol. It catalyses the reaction N-hexadecanoyl-(4R)-hydroxysphinganine + a 1,2-diacyl-sn-glycero-3-phosphocholine = N-hexadecanoyl-(4R)-hydroxysphinganine-phosphocholine + a 1,2-diacyl-sn-glycerol. The catalysed reaction is an N-acylsphing-4-enine + a 1,2-diacyl-sn-glycero-3-phosphoethanolamine = an N-acylsphing-4-enine 1-phosphoethanolamine + a 1,2-diacyl-sn-glycerol. Its pathway is sphingolipid metabolism. Its function is as follows. Major sphingomyelin synthase at the Golgi apparatus. Catalyzes the reversible transfer of phosphocholine moiety in sphingomyelin biosynthesis: in the forward reaction transfers phosphocholine head group of phosphatidylcholine (PC) on to ceramide (CER) to form ceramide phosphocholine (sphingomyelin, SM) and diacylglycerol (DAG) as by-product, and in the reverse reaction transfers phosphocholine from SM to DAG to form PC and CER. The direction of the reaction depends on the levels of CER and DAG in Golgi membranes. Converts the newly synthesized CER, that is transported from the endoplasmic reticulum to the trans-Golgi by the Cer transport protein (CERT), to SM. Can form a heteromeric complex with glucosylceramide synthase (GCS) increasing SMS activity and reducing glucosylceramide synthesis, a critical mechanism that controls the metabolic fate of CER in the Golgi. Does not use free phosphorylcholine or CDP-choline as donor. Can also transfer phosphoethanolamine head group of phosphatidylethanolamine (PE) on to CER to form ceramide phosphoethanolamine (CPE). Regulates receptor-mediated signal transduction via mitogenic DAG and proapoptotic CER, as well as via SM, a structural component of membrane rafts that serve as platforms for signal transduction and protein sorting. Plays a role in secretory transport via regulation of DAG pool at the Golgi apparatus and its downstream effects on PRKD1. (Microbial infection) Contributes to the brain SM production for Japanese encephalitis virus attachment and infection. This chain is Phosphatidylcholine:ceramide cholinephosphotransferase 1 (Sgms1), found in Mus musculus (Mouse).